A 145-amino-acid polypeptide reads, in one-letter code: Cytochrome c-type biogenesis protein CcmE (145 aa).

The Cytoplasmic portion of the chain corresponds to 1 to 7 (MKAKHQR). The chain crosses the membrane as a helical; Signal-anchor for type II membrane protein span at residues 8–28 (LILAVAALCGVAGAGVLAASA). Residues 29–145 (LRDEAAYFRT…PKNMKAAVEG (117 aa)) lie on the Periplasmic side of the membrane. Heme is bound by residues His123 and Tyr127.

The protein belongs to the CcmE/CycJ family.

The protein localises to the cell inner membrane. Its function is as follows. Heme chaperone required for the biogenesis of c-type cytochromes. Transiently binds heme delivered by CcmC and transfers the heme to apo-cytochromes in a process facilitated by CcmF and CcmH. This is Cytochrome c-type biogenesis protein CcmE from Sphingopyxis alaskensis (strain DSM 13593 / LMG 18877 / RB2256) (Sphingomonas alaskensis).